The chain runs to 229 residues: Triosephosphate isomerase (229 aa).

A substrate-binding site is contributed by 6–8; the sequence is NFK. H88 serves as the catalytic Electrophile. E157 acts as the Proton acceptor in catalysis. Substrate contacts are provided by G163 and S193.

The protein belongs to the triosephosphate isomerase family. As to quaternary structure, homodimer.

The protein localises to the cytoplasm. The catalysed reaction is D-glyceraldehyde 3-phosphate = dihydroxyacetone phosphate. It participates in carbohydrate biosynthesis; gluconeogenesis. Its pathway is carbohydrate degradation; glycolysis; D-glyceraldehyde 3-phosphate from glycerone phosphate: step 1/1. Its function is as follows. Involved in the gluconeogenesis. Catalyzes stereospecifically the conversion of dihydroxyacetone phosphate (DHAP) to D-glyceraldehyde-3-phosphate (G3P). The chain is Triosephosphate isomerase from Sulfurovum sp. (strain NBC37-1).